We begin with the raw amino-acid sequence, 400 residues long: Argininosuccinate synthase (400 aa).

Residues 9 to 17 (AYSGGVDTS) and Ala-37 each bind ATP. Tyr-88 provides a ligand contact to L-citrulline. Gly-118 serves as a coordination point for ATP. 3 residues coordinate L-aspartate: Thr-120, Asn-124, and Asp-125. Asn-124 is a binding site for L-citrulline. Arg-128, Ser-176, Ser-185, Glu-261, and Tyr-273 together coordinate L-citrulline.

Belongs to the argininosuccinate synthase family. Type 1 subfamily. As to quaternary structure, homotetramer.

It localises to the cytoplasm. The enzyme catalyses L-citrulline + L-aspartate + ATP = 2-(N(omega)-L-arginino)succinate + AMP + diphosphate + H(+). It participates in amino-acid biosynthesis; L-arginine biosynthesis; L-arginine from L-ornithine and carbamoyl phosphate: step 2/3. This chain is Argininosuccinate synthase, found in Prochlorococcus marinus (strain MIT 9211).